The chain runs to 21 residues: Thylakoid lumenal 13.8 kDa protein (21 aa).

It localises to the plastid. The protein localises to the chloroplast thylakoid lumen. The chain is Thylakoid lumenal 13.8 kDa protein from Spinacia oleracea (Spinach).